The following is a 331-amino-acid chain: Vitamin B12 import system permease protein BtuC (331 aa).

The next 9 membrane-spanning stretches (helical) occupy residues 20 to 42, 62 to 84, 91 to 113, 118 to 140, 147 to 169, 189 to 208, 240 to 262, 277 to 299, and 306 to 325; these read IMSV…FLSP, LVAA…VLLG, GVLG…LPVL, IFML…IARA, RLLL…AFYF, ASWY…VWLC, LAIS…VGLV, YLLP…GARL, and LPLG…WMLV.

The protein belongs to the binding-protein-dependent transport system permease family. FecCD subfamily. The complex is composed of two ATP-binding proteins (BtuD), two transmembrane proteins (BtuC) and a solute-binding protein (BtuF).

The protein resides in the cell inner membrane. Part of the ABC transporter complex BtuCDF involved in vitamin B12 import. Involved in the translocation of the substrate across the membrane. In Vibrio parahaemolyticus serotype O3:K6 (strain RIMD 2210633), this protein is Vitamin B12 import system permease protein BtuC.